The following is a 274-amino-acid chain: Putative ABC transporter ATP-binding protein alr3946 (274 aa).

In terms of domain architecture, ABC transporter spans L6–G242. G40–T47 serves as a coordination point for ATP.

Belongs to the ABC transporter superfamily.

Its subcellular location is the cell inner membrane. In terms of biological role, probably part of an ABC transporter complex. Responsible for energy coupling to the transport system. The sequence is that of Putative ABC transporter ATP-binding protein alr3946 from Nostoc sp. (strain PCC 7120 / SAG 25.82 / UTEX 2576).